The following is a 1220-amino-acid chain: Plasma membrane calcium-transporting ATPase 1 (1220 aa).

Gly2 bears the N-acetylglycine mark. The Cytoplasmic segment spans residues 2-105 (GDMANNSVAY…KTFLQLVWEA (104 aa)). Phosphoserine is present on residues Ser8 and Ser17. A helical transmembrane segment spans residues 106–126 (LQDVTLIILEIAAIVSLGLSF). Residues 127–154 (YQPPEGDNALCGEVSVGEEEGEGETGWI) lie on the Extracellular side of the membrane. A helical membrane pass occupies residues 155 to 175 (EGAAILLSVVCVVLVTAFNDW). At 176 to 366 (SKEKQFRGLQ…KEKSVLQGKL (191 aa)) the chain is on the cytoplasmic side. The tract at residues 297-356 (EEEKKDEKKKEKKNKKQDGAIENRNKAKAQDGAAMEMQPLKSEEGGDGDEKDKKKANLPK) is disordered. Composition is skewed to basic and acidic residues over residues 312–325 (KQDG…KAKA) and 337–356 (KSEE…NLPK). Position 338 is a phosphoserine (Ser338). A helical membrane pass occupies residues 367–386 (TKLAVQIGKAGLLMSAITVI). The Extracellular segment spans residues 387–418 (ILVLYFVIDTFWVQKRPWLAECTPIYIQYFVK). A helical membrane pass occupies residues 419–439 (FFIIGVTVLVVAVPEGLPLAV). At 440-855 (TISLAYSVKK…RNVYDSISKF (416 aa)) the chain is on the cytoplasmic side. Residue Asp475 is the 4-aspartylphosphate intermediate of the active site. Mg(2+) contacts are provided by Asp475, Thr477, and Asp797. A helical transmembrane segment spans residues 856 to 876 (LQFQLTVNVVAVIVAFTGACI). At 877–882 (TQDSPL) the chain is on the extracellular side. Residues 883–903 (KAVQMLWVNLIMDTLASLALA) traverse the membrane as a helical segment. The Cytoplasmic segment spans residues 904–927 (TEPPTESLLLRKPYGRNKPLISRT). A helical membrane pass occupies residues 928-948 (MMKNILGHAFYQLVVVFTLLF). At 949 to 971 (AGEKFFDIDSGRNAPLHAPPSEH) the chain is on the extracellular side. The helical transmembrane segment at 972–991 (YTIVFNTFVLMQLFNEINAR) threads the bilayer. Residues 992–1005 (KIHGERNVFEGIFN) are Cytoplasmic-facing. A helical transmembrane segment spans residues 1006-1027 (NAIFCTIVLGTFVVQIIIVQFG). The Extracellular segment spans residues 1028 to 1039 (GKPFSCSELSIE). Residues 1040 to 1060 (QWLWSIFLGMGTLLWGQLIST) traverse the membrane as a helical segment. Residues 1061-1220 (IPTSRLKFLK…SPLHSLETSL (160 aa)) lie on the Cytoplasmic side of the membrane. The calmodulin-binding subdomain A stretch occupies residues 1100–1117 (LRRGQILWFRGLNRIQTQ). Residue Thr1116 is modified to Phosphothreonine; by PKC. The tract at residues 1118–1220 (IRVVNAFRSS…SPLHSLETSL (103 aa)) is required for basolateral membrane targeting. 2 positions are modified to phosphoserine: Ser1140 and Ser1155. The segment at 1162–1220 (IDDTDAEDDAPTKRNSSPPPSPNKNNNAVDSGIHLTIEMNKSATSSSPGSPLHSLETSL) is disordered. The residue at position 1165 (Thr1165) is a Phosphothreonine. At Ser1177 the chain carries Phosphoserine; by PKA. A phosphoserine mark is found at Ser1178 and Ser1182. The segment covering 1200-1220 (MNKSATSSSPGSPLHSLETSL) has biased composition (polar residues).

Belongs to the cation transport ATPase (P-type) (TC 3.A.3) family. Type IIB subfamily. As to quaternary structure, monomer. Dimer. Oligomer. Calmodulin binding. Interacts with PDZD11. Interacts with SLC35G1 and STIM1. Interacts with YWHAE; interacts with the monomeric and dimeric forms of the YWHAE but prefer the monomer form; this interaction inhibits calcium-transporting ATPase activity. Interacts with NPTN; this interaction stabilizes ATP2B1 and increases ATPase activity; this interaction controls T cell calcium homeostasis following T cell activation. Interacts with EPB41; regulates small intestinal calcium absorption through regulation of membrane expression of ATP2B1. Isoform B is ubiquitously expressed. Isoforms A and E have only been found in brain cortex. Isoform C is found in brain cortex, skeletal muscle and heart muscle. Isoform D has only been found in fetal skeletal muscle. Isoform K has been found in small intestine and liver. Isoform B is expressed in hair cells of inner ear.

Its subcellular location is the cell membrane. The protein localises to the basolateral cell membrane. It localises to the synapse. The protein resides in the presynaptic cell membrane. It is found in the cytoplasmic vesicle. Its subcellular location is the secretory vesicle. The protein localises to the synaptic vesicle membrane. It carries out the reaction Ca(2+)(in) + ATP + H2O = Ca(2+)(out) + ADP + phosphate + H(+). In terms of biological role, catalyzes the hydrolysis of ATP coupled with the transport of calcium from the cytoplasm to the extracellular space thereby maintaining intracellular calcium homeostasis. Plays a role in blood pressure regulation through regulation of intracellular calcium concentration and nitric oxide production leading to regulation of vascular smooth muscle cells vasoconstriction. Positively regulates bone mineralization through absorption of calcium from the intestine. Plays dual roles in osteoclast differentiation and survival by regulating RANKL-induced calcium oscillations in preosteoclasts and mediating calcium extrusion in mature osteoclasts. Regulates insulin sensitivity through calcium/calmodulin signaling pathway by regulating AKT1 activation and NOS3 activation in endothelial cells. May play a role in synaptic transmission by modulating calcium and proton dynamics at the synaptic vesicles. In Rattus norvegicus (Rat), this protein is Plasma membrane calcium-transporting ATPase 1.